We begin with the raw amino-acid sequence, 204 residues long: N-(5'-phosphoribosyl)anthranilate isomerase (204 aa).

This sequence belongs to the TrpF family.

It carries out the reaction N-(5-phospho-beta-D-ribosyl)anthranilate = 1-(2-carboxyphenylamino)-1-deoxy-D-ribulose 5-phosphate. The protein operates within amino-acid biosynthesis; L-tryptophan biosynthesis; L-tryptophan from chorismate: step 3/5. The chain is N-(5'-phosphoribosyl)anthranilate isomerase from Bacillus cereus (strain B4264).